We begin with the raw amino-acid sequence, 388 residues long: Succinate--CoA ligase [ADP-forming] subunit beta (388 aa).

One can recognise an ATP-grasp domain in the interval 9–244; the sequence is KALFAEYGLP…PSQDDAREAH (236 aa). ATP is bound by residues Lys46, 53-55, Glu99, Thr102, and Glu107; that span reads GRG. Residues Asn199 and Asp213 each coordinate Mg(2+). Residues Asn264 and 321–323 contribute to the substrate site; that span reads GIV.

Belongs to the succinate/malate CoA ligase beta subunit family. In terms of assembly, heterotetramer of two alpha and two beta subunits. It depends on Mg(2+) as a cofactor.

The enzyme catalyses succinate + ATP + CoA = succinyl-CoA + ADP + phosphate. It catalyses the reaction GTP + succinate + CoA = succinyl-CoA + GDP + phosphate. The protein operates within carbohydrate metabolism; tricarboxylic acid cycle; succinate from succinyl-CoA (ligase route): step 1/1. Its function is as follows. Succinyl-CoA synthetase functions in the citric acid cycle (TCA), coupling the hydrolysis of succinyl-CoA to the synthesis of either ATP or GTP and thus represents the only step of substrate-level phosphorylation in the TCA. The beta subunit provides nucleotide specificity of the enzyme and binds the substrate succinate, while the binding sites for coenzyme A and phosphate are found in the alpha subunit. The polypeptide is Succinate--CoA ligase [ADP-forming] subunit beta (Shewanella halifaxensis (strain HAW-EB4)).